A 144-amino-acid chain; its full sequence is Ribonuclease VapC45 (144 aa).

Mg(2+) is bound by residues aspartate 7 and aspartate 102.

It belongs to the PINc/VapC protein family. Requires Mg(2+) as cofactor.

Toxic component of a type II toxin-antitoxin (TA) system. An RNase. Its cognate antitoxin is VapB45. This Mycobacterium tuberculosis (strain CDC 1551 / Oshkosh) protein is Ribonuclease VapC45.